Here is an 80-residue protein sequence, read N- to C-terminus: Mu-conotoxin BuIIIC (80 aa).

A signal peptide spans 1 to 22 (MMSKLGVLLTICLLLFPLFALP). Positions 23–51 (QDGDQPADRPAERMQDDLSSEQHPLFEKR) are excised as a propeptide. 3 disulfide bridges follow: C56–C70, C57–C76, and C66–C77. Cysteine amide is present on C77.

Belongs to the conotoxin M superfamily. In terms of tissue distribution, expressed by the venom duct.

The protein localises to the secreted. Its function is as follows. Mu-conotoxins block voltage-gated sodium channels. Extremely potent inhibitor of Nav1.4/SCN4A (96% inhibition at 1 uM). The inhibition is very slowly reversible. This is Mu-conotoxin BuIIIC from Conus bullatus (Bubble cone).